We begin with the raw amino-acid sequence, 420 residues long: Putative competence-damage inducible protein (420 aa).

The protein belongs to the CinA family.

This chain is Putative competence-damage inducible protein, found in Halalkalibacterium halodurans (strain ATCC BAA-125 / DSM 18197 / FERM 7344 / JCM 9153 / C-125) (Bacillus halodurans).